The following is a 338-amino-acid chain: tRNA N6-adenosine threonylcarbamoyltransferase (338 aa).

The Fe cation site is built by histidine 111 and histidine 115. Residues 134 to 138 (LVSGG), aspartate 167, glycine 180, and asparagine 272 contribute to the substrate site. Aspartate 300 contacts Fe cation.

This sequence belongs to the KAE1 / TsaD family. It depends on Fe(2+) as a cofactor.

The protein localises to the cytoplasm. The enzyme catalyses L-threonylcarbamoyladenylate + adenosine(37) in tRNA = N(6)-L-threonylcarbamoyladenosine(37) in tRNA + AMP + H(+). Functionally, required for the formation of a threonylcarbamoyl group on adenosine at position 37 (t(6)A37) in tRNAs that read codons beginning with adenine. Is involved in the transfer of the threonylcarbamoyl moiety of threonylcarbamoyl-AMP (TC-AMP) to the N6 group of A37, together with TsaE and TsaB. TsaD likely plays a direct catalytic role in this reaction. The chain is tRNA N6-adenosine threonylcarbamoyltransferase from Aliivibrio salmonicida (strain LFI1238) (Vibrio salmonicida (strain LFI1238)).